The following is a 162-amino-acid chain: Probable chemoreceptor glutamine deamidase CheD (162 aa).

It belongs to the CheD family.

The enzyme catalyses L-glutaminyl-[protein] + H2O = L-glutamyl-[protein] + NH4(+). Probably deamidates glutamine residues to glutamate on methyl-accepting chemotaxis receptors (MCPs), playing an important role in chemotaxis. This is Probable chemoreceptor glutamine deamidase CheD from Clostridium kluyveri (strain ATCC 8527 / DSM 555 / NBRC 12016 / NCIMB 10680 / K1).